We begin with the raw amino-acid sequence, 88 residues long: Small ribosomal subunit protein bS16 (88 aa).

Belongs to the bacterial ribosomal protein bS16 family.

The chain is Small ribosomal subunit protein bS16 from Buchnera aphidicola subsp. Cinara cedri (strain Cc).